The chain runs to 326 residues: Putative [LysW]-lysine/[LysW]-ornithine hydrolase (326 aa).

Histidine 66 is a binding site for Zn(2+). The active site involves aspartate 68. Residue aspartate 90 coordinates Zn(2+). The Proton acceptor role is filled by glutamate 117. Residues glutamate 118, glutamate 139, and histidine 297 each contribute to the Zn(2+) site.

This sequence belongs to the peptidase M20A family. LysK subfamily. Zn(2+) is required as a cofactor. Co(2+) serves as cofactor.

It is found in the cytoplasm. It catalyses the reaction [amino-group carrier protein]-C-terminal-gamma-(L-lysyl)-L-glutamate + H2O = [amino-group carrier protein]-C-terminal-L-glutamate + L-lysine. The enzyme catalyses [amino-group carrier protein]-C-terminal-gamma-(L-ornithyl)-L-glutamate + H2O = [amino-group carrier protein]-C-terminal-L-glutamate + L-ornithine. It functions in the pathway amino-acid biosynthesis; L-lysine biosynthesis via AAA pathway; L-lysine from L-alpha-aminoadipate (Thermus route): step 5/5. It participates in amino-acid biosynthesis; L-arginine biosynthesis. Functionally, catalyzes the release of L-lysine from [LysW]-gamma-L-lysine and the release of L-ornithine from [LysW]-L-ornithine. The chain is Putative [LysW]-lysine/[LysW]-ornithine hydrolase from Pyrococcus furiosus (strain ATCC 43587 / DSM 3638 / JCM 8422 / Vc1).